A 308-amino-acid chain; its full sequence is Type II restriction enzyme MamI (308 aa).

It catalyses the reaction Endonucleolytic cleavage of DNA to give specific double-stranded fragments with terminal 5'-phosphates.. Functionally, a P subtype restriction enzyme that recognizes the double-stranded sequence 5'-GATNNNNATC-3' and cleaves after N-5. This chain is Type II restriction enzyme MamI, found in Microbacterium ammoniaphilum.